The following is a 20-amino-acid chain: Unknown protein from 2D-PAGE (20 aa).

This Nicotiana tabacum (Common tobacco) protein is Unknown protein from 2D-PAGE.